A 323-amino-acid chain; its full sequence is Calcium homeostasis modulator protein 2 (323 aa).

The Cytoplasmic portion of the chain corresponds to 1–21 (MAALIAENFRFLSLFFKSKDV). The central pore stretch occupies residues 14-39 (LFFKSKDVMIFNGLVALGTVGSQELF). The chain crosses the membrane as a helical span at residues 22-43 (MIFNGLVALGTVGSQELFSVVA). Residues 44-52 (FHCPCSPAR) are Extracellular-facing. 2 disulfides stabilise this stretch: cysteine 46–cysteine 130 and cysteine 48–cysteine 162. A helical transmembrane segment spans residues 53–76 (NYLYGLAAIGVPALVLFIIGIILN). Residues 77 to 101 (NHTWNLVAECQHRRTKNCSAAPTFL) are Cytoplasmic-facing. A helical transmembrane segment spans residues 102–132 (LLSSILGRAAVAPVTWSVISLLRGEAYVCAL). The Extracellular segment spans residues 133-179 (SEFVDPSSLTAREEHFPSAHATEILARFPCKENPDNLSDFREEVSRR). Residues 145-152 (EEHFPSAH) are hemichannel docking. A helical transmembrane segment spans residues 180 to 206 (LRYESQLFGWLLIGVVAILVFLTKCLK). Topologically, residues 207–323 (HYCSPLSYRQ…DNVEMALLPS (117 aa)) are cytoplasmic. An intersubunit interaction region spans residues 214-251 (YRQEAYWAQYRANEDQLFQRTAEVHSRVLAANNVRRFF).

It belongs to the CALHM family. Homo-undecamer. Two undecameric hemichannels can assemble in a head-to-head manner to form a gap junction. In terms of tissue distribution, placenta.

The protein localises to the cell membrane. The enzyme catalyses ATP(in) = ATP(out). With respect to regulation, inhibited by Ca(2+) and ruthenium red in a voltage-dependent way. In terms of biological role, pore-forming subunit of Ca(2+) homeostasis modulator channels. Mediates ATP release from astrocytes and ATP-induced Ca(2+) influx in microglia thus regulating neuronal ATP and Ca(2+) homeostasis, synaptic transmission and neuroinflammatory response. May form intercellular gap junctions. The gating mechanism remains unknown. The polypeptide is Calcium homeostasis modulator protein 2 (Homo sapiens (Human)).